The chain runs to 200 residues: Recombination protein RecR (200 aa).

The C4-type zinc finger occupies 60 to 75 (CVYCQALTEDDVCNIC). In terms of domain architecture, Toprim spans 83-177 (TKLCIIESML…KISRIGFGVP (95 aa)).

The protein belongs to the RecR family.

May play a role in DNA repair. It seems to be involved in an RecBC-independent recombinational process of DNA repair. It may act with RecF and RecO. This Francisella tularensis subsp. tularensis (strain SCHU S4 / Schu 4) protein is Recombination protein RecR.